Here is a 210-residue protein sequence, read N- to C-terminus: Imidazoleglycerol-phosphate dehydratase (210 aa).

A disordered region spans residues 1 to 23 (MNDSLLSNGHAPPLRQATVDRQT).

The protein belongs to the imidazoleglycerol-phosphate dehydratase family.

The protein resides in the cytoplasm. The enzyme catalyses D-erythro-1-(imidazol-4-yl)glycerol 3-phosphate = 3-(imidazol-4-yl)-2-oxopropyl phosphate + H2O. It functions in the pathway amino-acid biosynthesis; L-histidine biosynthesis; L-histidine from 5-phospho-alpha-D-ribose 1-diphosphate: step 6/9. The polypeptide is Imidazoleglycerol-phosphate dehydratase (Thermosynechococcus vestitus (strain NIES-2133 / IAM M-273 / BP-1)).